Reading from the N-terminus, the 316-residue chain is Annexin A13 (316 aa).

Glycine 2 carries the N-myristoyl glycine lipid modification. 4 Annexin repeats span residues 14-85 (FDVD…ALLD), 86-157 (RPSE…SLLQ), 169-241 (DLAG…TLVR), and 245-316 (DCED…ALLH).

It belongs to the annexin family. As to quaternary structure, monomer and homodimer. Detected in epithelial cells in colon and jejunum (at protein level). Detected in epithelial cells in jejunum.

Its subcellular location is the apical cell membrane. The protein resides in the cell membrane. It is found in the cytoplasmic vesicle. Functionally, binds to membranes enriched in phosphatidylserine or phosphatidylglycerol in a calcium-dependent manner. Half-maximal membrane binding requires about 60 uM calcium. Does not bind to membranes that lack phospholipids with an acidic headgroup. Its function is as follows. Binds to membranes enriched in phosphatidylserine or phosphatidylglycerol in a calcium-dependent manner, but requires higher calcium levels for membrane binding than isoform A. Half-maximal membrane binding requires about 320 uM calcium. This is Annexin A13 (ANXA13) from Homo sapiens (Human).